A 592-amino-acid polypeptide reads, in one-letter code: Frizzled-9 (592 aa).

An N-terminal signal peptide occupies residues 1–23 (MAVPPLLRGALLLWQLLATGGAA). Residues 24-230 (LEIGRFDPER…EVFWSRRDKD (207 aa)) lie on the Extracellular side of the membrane. The 122-residue stretch at 35–156 (RGPAPCQAME…NDPHALCMEA (122 aa)) folds into the FZ domain. Cystine bridges form between cysteine 40/cysteine 101, cysteine 48/cysteine 94, cysteine 85/cysteine 123, cysteine 112/cysteine 153, and cysteine 116/cysteine 140. N-linked (GlcNAc...) asparagine glycosylation is present at asparagine 54. Residues 59 to 173 (PNLLGHTSQG…PTEPHKGLGM (115 aa)) are required for Wnt-activated receptor activity. Asparagine 159 carries N-linked (GlcNAc...) asparagine glycosylation. The chain crosses the membrane as a helical span at residues 231–251 (FALVWMAVWSALCFFSTAFTV). Residues 252-267 (FTFLLEPHRFQYPERP) lie on the Cytoplasmic side of the membrane. A helical membrane pass occupies residues 268–288 (IIFLSMCYNVYSLAFLIRAVA). At 289-316 (GAQSVACDQEAGALYVIQEGLENTGCTL) the chain is on the extracellular side. Residues 317-337 (VFLLLYYFGMASSLWWVVLTL) traverse the membrane as a helical segment. Topologically, residues 338-356 (TWFLAAGKKWGHEAIEAHG) are cytoplasmic. A helical membrane pass occupies residues 357 to 377 (SYFHMAAWGLPALKTIVVLTL). The Extracellular portion of the chain corresponds to 378 to 401 (RKVAGDELTGLCYVASMDPAALTG). The chain crosses the membrane as a helical span at residues 402–422 (FVLVPLSCYLVLGTSFLLTGF). Topologically, residues 423-448 (VALFHIRKIMKTGGTNTEKLEKLMVK) are cytoplasmic. Residues 449 to 469 (IGVFSILYTVPATCVIVCYVY) form a helical membrane-spanning segment. Residues 470–509 (ERLNMDFWRLRATEQPCTAATVPGGRRDCSLPGGSVPTVA) are Extracellular-facing. The helical transmembrane segment at 510–530 (VFMLKIFMSLVVGITSGVWVW) threads the bilayer. Topologically, residues 531-592 (SSKTFQTWQS…DPSLENPTHL (62 aa)) are cytoplasmic. A Lys-Thr-X-X-X-Trp motif, mediates interaction with the PDZ domain of Dvl family members motif is present at residues 533–538 (KTFQTW). A required for CTNNB1 accumulation and TCF transcription factor activity region spans residues 555-592 (ACRTPGGYGRGTHCHYKAPTVVLHMTKTDPSLENPTHL).

It belongs to the G-protein coupled receptor Fz/Smo family. In terms of processing, ubiquitinated by ZNRF3, leading to its degradation by the proteasome. As to expression, in the embryo, found in the neural tube, trunk skeletal muscle precursors (myotomes), limb skeletal anlagen, craniofacial regions and nephric ducts. In the adult, expression is abundant in heart, brain, testis and skeletal muscle. In the testis, expressed in all spermatogenic cell types. Lower levels in adult lung, liver and kidney. Barely detectable in spleen. Expressed also in chondrocytes.

It localises to the cell membrane. Its function is as follows. Receptor for WNT2 that is coupled to the beta-catenin canonical signaling pathway, which leads to the activation of disheveled proteins, inhibition of GSK-3 kinase, nuclear accumulation of beta-catenin and activation of Wnt target genes. Plays a role in neuromuscular junction (NMJ) assembly by negatively regulating the clustering of acetylcholine receptors (AChR) through the beta-catenin canonical signaling pathway. May play a role in neural progenitor cells (NPCs) viability through the beta-catenin canonical signaling pathway by negatively regulating cell cycle arrest leading to inhibition of neuron apoptotic process. During hippocampal development, regulates neuroblast proliferation and apoptotic cell death. Controls bone formation through non canonical Wnt signaling mediated via ISG15. Positively regulates bone regeneration through non canonical Wnt signaling. In Mus musculus (Mouse), this protein is Frizzled-9 (Fzd9).